We begin with the raw amino-acid sequence, 293 residues long: Ribosomal RNA small subunit methyltransferase A (293 aa).

Residues asparagine 33, valine 35, glycine 60, glutamate 81, aspartate 111, and asparagine 130 each contribute to the S-adenosyl-L-methionine site.

The protein belongs to the class I-like SAM-binding methyltransferase superfamily. rRNA adenine N(6)-methyltransferase family. RsmA subfamily.

It localises to the cytoplasm. It carries out the reaction adenosine(1518)/adenosine(1519) in 16S rRNA + 4 S-adenosyl-L-methionine = N(6)-dimethyladenosine(1518)/N(6)-dimethyladenosine(1519) in 16S rRNA + 4 S-adenosyl-L-homocysteine + 4 H(+). Functionally, specifically dimethylates two adjacent adenosines (A1518 and A1519) in the loop of a conserved hairpin near the 3'-end of 16S rRNA in the 30S particle. May play a critical role in biogenesis of 30S subunits. This chain is Ribosomal RNA small subunit methyltransferase A, found in Corynebacterium glutamicum (strain R).